Here is a 529-residue protein sequence, read N- to C-terminus: ATP synthase F(1) complex catalytic subunit beta, mitochondrial (529 aa).

The N-terminal 46 residues, 1–46 (MLSLVGRVASASASGALRGLSPSAALPQAQLLLRAAPAGVHPARDY), are a transit peptide targeting the mitochondrion. O-linked (GlcNAc) serine glycosylation occurs at serine 106. An N6-acetyllysine; alternate mark is found at lysine 124, lysine 133, and lysine 161. N6-succinyllysine; alternate is present on residues lysine 124, lysine 133, and lysine 161. An N6-acetyllysine modification is found at lysine 198. ADP-binding residues include glycine 209, valine 210, glycine 211, lysine 212, threonine 213, and valine 214. Glycine 209 is a binding site for ATP. Glycine 209, valine 210, glycine 211, lysine 212, and threonine 213 together coordinate phosphate. ATP is bound by residues glycine 211, lysine 212, threonine 213, and valine 214. Threonine 213 contacts Mg(2+). Glutamate 238 lines the Mg(2+) pocket. An ATP-binding site is contributed by arginine 239. An N6-acetyllysine; alternate mark is found at lysine 259 and lysine 264. An N6-succinyllysine; alternate mark is found at lysine 259 and lysine 264. Position 312 is a phosphothreonine (threonine 312). Lysine 426 carries the post-translational modification N6-acetyllysine. Phosphoserine is present on serine 433. N6-acetyllysine is present on residues lysine 480 and lysine 485. Lysine 522 is modified (N6-acetyllysine; alternate). Lysine 522 bears the N6-succinyllysine; alternate mark. Residue serine 529 is modified to Phosphoserine.

This sequence belongs to the ATPase alpha/beta chains family. In terms of assembly, homotrimer. Component of the ATP synthase complex composed at least of ATP5F1A/subunit alpha, ATP5F1B/subunit beta, ATP5MC1/subunit c (homooctomer), MT-ATP6/subunit a, MT-ATP8/subunit 8, ATP5ME/subunit e, ATP5MF/subunit f, ATP5MG/subunit g, ATP5MK/subunit k, ATP5MJ/subunit j, ATP5F1C/subunit gamma, ATP5F1D/subunit delta, ATP5F1E/subunit epsilon, ATP5PF/subunit F6, ATP5PB/subunit b, ATP5PD/subunit d, ATP5PO/subunit OSCP. ATP synthase complex consists of a soluble F(1) head domain (subunits alpha(3) and beta(3)) - the catalytic core - and a membrane F(0) domain - the membrane proton channel (subunits c, a, 8, e, f, g, k and j). These two domains are linked by a central stalk (subunits gamma, delta, and epsilon) rotating inside the F1 region and a stationary peripheral stalk (subunits F6, b, d, and OSCP). Interacts with PPIF. Interacts with BCL2L1 isoform BCL-X(L); the interaction mediates the association of BCL2L1 isoform BCL-X(L) with the mitochondrial membrane F(1)F(0) ATP synthase and enhances neurons metabolic efficiency. Interacts with CLN5 and PPT1. Interacts with S100A1; this interaction increases F1-ATPase activity. Interacts with MTLN. Interacts with TTC5/STRAP; the interaction results in decreased mitochondrial ATP production. Acetylation of Lys-133 is observed in liver mitochondria from fasted mice but not from fed mice.

The protein localises to the mitochondrion inner membrane. It catalyses the reaction ATP + H2O + 4 H(+)(in) = ADP + phosphate + 5 H(+)(out). Catalytic subunit beta, of the mitochondrial membrane ATP synthase complex (F(1)F(0) ATP synthase or Complex V) that produces ATP from ADP in the presence of a proton gradient across the membrane which is generated by electron transport complexes of the respiratory chain. ATP synthase complex consist of a soluble F(1) head domain - the catalytic core - and a membrane F(1) domain - the membrane proton channel. These two domains are linked by a central stalk rotating inside the F(1) region and a stationary peripheral stalk. During catalysis, ATP synthesis in the catalytic domain of F(1) is coupled via a rotary mechanism of the central stalk subunits to proton translocation. In vivo, can only synthesize ATP although its ATP hydrolase activity can be activated artificially in vitro. With the subunit alpha (ATP5F1A), forms the catalytic core in the F(1) domain. This is ATP synthase F(1) complex catalytic subunit beta, mitochondrial from Mus musculus (Mouse).